We begin with the raw amino-acid sequence, 126 residues long: Glycine cleavage system H protein (126 aa).

One can recognise a Lipoyl-binding domain in the interval Lys22–Glu103. Lys63 bears the N6-lipoyllysine mark.

It belongs to the GcvH family. The glycine cleavage system is composed of four proteins: P, T, L and H. The cofactor is (R)-lipoate.

Its function is as follows. The glycine cleavage system catalyzes the degradation of glycine. The H protein shuttles the methylamine group of glycine from the P protein to the T protein. The sequence is that of Glycine cleavage system H protein from Thermoanaerobacter sp. (strain X514).